The primary structure comprises 588 residues: Proteasome-associated ATPase (588 aa).

Residues Met-1–Arg-10 show a composition bias toward basic and acidic residues. Residues Met-1 to Ala-22 are disordered. Positions Arg-47–Pro-94 form a coiled coil. An ATP-binding site is contributed by Gly-276–Leu-281. Residues Tyr-587–Leu-588 form a docks into pockets in the proteasome alpha-ring region.

It belongs to the AAA ATPase family. Homohexamer. Assembles into a hexameric ring structure that caps the 20S proteasome core. Strongly interacts with the prokaryotic ubiquitin-like protein Pup through a hydrophobic interface; the interacting region of ARC lies in its N-terminal coiled-coil domain. There is one Pup binding site per ARC hexamer ring. Upon ATP-binding, the C-terminus of ARC interacts with the alpha-rings of the proteasome core, possibly by binding to the intersubunit pockets.

It participates in protein degradation; proteasomal Pup-dependent pathway. Its function is as follows. ATPase which is responsible for recognizing, binding, unfolding and translocation of pupylated proteins into the bacterial 20S proteasome core particle. May be essential for opening the gate of the 20S proteasome via an interaction with its C-terminus, thereby allowing substrate entry and access to the site of proteolysis. Thus, the C-termini of the proteasomal ATPase may function like a 'key in a lock' to induce gate opening and therefore regulate proteolysis. The chain is Proteasome-associated ATPase from Streptomyces griseus subsp. griseus (strain JCM 4626 / CBS 651.72 / NBRC 13350 / KCC S-0626 / ISP 5235).